Here is a 347-residue protein sequence, read N- to C-terminus: GMP reductase (347 aa).

Position 108 to 131 (108 to 131 (NDFLKLQRILALSPALRFICVDVA)) interacts with NADP(+). Residues Gly-181 and Gly-183 each coordinate K(+). The active-site Thioimidate intermediate is the Cys-186. 216–239 (IVGDGGCTCPGDVAKAFGGGADFV) is a binding site for NADP(+).

This sequence belongs to the IMPDH/GMPR family. GuaC type 1 subfamily. Homotetramer.

The catalysed reaction is IMP + NH4(+) + NADP(+) = GMP + NADPH + 2 H(+). Functionally, catalyzes the irreversible NADPH-dependent deamination of GMP to IMP. It functions in the conversion of nucleobase, nucleoside and nucleotide derivatives of G to A nucleotides, and in maintaining the intracellular balance of A and G nucleotides. This Tolumonas auensis (strain DSM 9187 / NBRC 110442 / TA 4) protein is GMP reductase.